Reading from the N-terminus, the 242-residue chain is 4-hydroxy-tetrahydrodipicolinate reductase (242 aa).

NAD(+)-binding positions include 8-13 (GAKGRM), 75-77 (GTT), and 99-102 (ATNM). The active-site Proton donor/acceptor is the H131. Residue H132 participates in (S)-2,3,4,5-tetrahydrodipicolinate binding. K135 serves as the catalytic Proton donor. 141–142 (GT) lines the (S)-2,3,4,5-tetrahydrodipicolinate pocket.

It belongs to the DapB family.

The protein localises to the cytoplasm. It catalyses the reaction (S)-2,3,4,5-tetrahydrodipicolinate + NAD(+) + H2O = (2S,4S)-4-hydroxy-2,3,4,5-tetrahydrodipicolinate + NADH + H(+). The enzyme catalyses (S)-2,3,4,5-tetrahydrodipicolinate + NADP(+) + H2O = (2S,4S)-4-hydroxy-2,3,4,5-tetrahydrodipicolinate + NADPH + H(+). It functions in the pathway amino-acid biosynthesis; L-lysine biosynthesis via DAP pathway; (S)-tetrahydrodipicolinate from L-aspartate: step 4/4. Catalyzes the conversion of 4-hydroxy-tetrahydrodipicolinate (HTPA) to tetrahydrodipicolinate. The sequence is that of 4-hydroxy-tetrahydrodipicolinate reductase from Campylobacter jejuni subsp. jejuni serotype O:6 (strain 81116 / NCTC 11828).